A 280-amino-acid polypeptide reads, in one-letter code: MKQMGSMHPVQVIAVTGGKGGVGKTNVSVNLALALADLGRRVMLLDADLGLANVDVLLGLTPKRTLADVIEGRCELRDVLLLGPGGVRIVPAASGTQSMVHLSPMQHAGLIQAFSDISDNLDVLVVDTAAGIGDSVVSFVRAAQEVLLVVCDEPTSITDAYALIKLLNRDHGMTRFRVLANMAHSPQEGRNLFAKLTKVTDRFLDVALQYVGVIPYDESVRKAVQKQRAVYEAFPRSKASLAFKAVAQKVDSWPLPANPRGHLEFFVERLVQHPATGSAV.

ATP is bound by residues 19–26, Glu153, Asn181, 215–217, and Arg221; these read KGGVGKTN and PYD.

It belongs to the ParA family. Forms homodimers. Interacts with FleQ.

With respect to regulation, ATP-binding allows dimerization and subsequent antagonistic effect against FleQ. ATPase that plays an important role in maintaining flagellar number in Pseudomonas aeruginosa. Exhibits anti-activator activity against FleQ, the global transcriptional regulator of flagellar genes. The sequence is that of Antiactivator FleN from Pseudomonas aeruginosa (strain ATCC 15692 / DSM 22644 / CIP 104116 / JCM 14847 / LMG 12228 / 1C / PRS 101 / PAO1).